Reading from the N-terminus, the 233-residue chain is Aquaglyceroporin AqpS (233 aa).

2 consecutive transmembrane segments (helical) span residues 11–31 and 40–60; these read VAEALGTGLLVAAVVGSGIMA and LALVANTIATGAILVVLVTIL. The NPA 1 signature appears at 69-71; it reads NPA. 3 helical membrane-spanning segments follow: residues 89 to 109, 125 to 145, and 152 to 172; these read AYVIAQVAGAIAGTALAHLMF, AQWLSEGVAAFGLVATILAGI, and VPWLVGLYITAAYWFTASTSF. Positions 174-176 match the NPA 2 motif; sequence NPA. A helical transmembrane segment spans residues 193-213; the sequence is GDLPGFVIAELLGAVCALALM.

The protein belongs to the MIP/aquaporin (TC 1.A.8) family. NIP (TC 1.A.8.12) subfamily.

Its subcellular location is the cell inner membrane. Its function is as follows. Involved in resistance to arsenic. Facilitates efflux of arsenite [As(III)]. Arsenate [As(V)] enters the cell through phosphate transport systems and is reduced to arsenite by the arsenate reductase ArsC. Internally generated arsenite flows out of the cell by downhill movement through AqpS. Can also transport the highly toxic methylarsenite [MAs(III)] and the relatively non-toxic methylarsenate [MAs(V)]. May be a component of an methylarsenite resistance pathway in which methylarsenite enters cells via AqpS, is oxidized by ArsH to methylarsenate, which exits the cells via AqpS. This pathway may confer a selective advantage for R.melliloti to grow in the presence of environmental methylarsenicals. The chain is Aquaglyceroporin AqpS from Rhizobium meliloti (strain 1021) (Ensifer meliloti).